The following is a 168-amino-acid chain: G/U mismatch-specific DNA glycosylase (168 aa).

The protein belongs to the uracil-DNA glycosylase (UDG) superfamily. TDG/mug family. In terms of assembly, binds DNA as a monomer.

The protein localises to the cytoplasm. The enzyme catalyses Specifically hydrolyzes mismatched double-stranded DNA and polynucleotides, releasing free uracil.. In terms of biological role, excises ethenocytosine and uracil, which can arise by alkylation or deamination of cytosine, respectively, from the corresponding mispairs with guanine in ds-DNA. It is capable of hydrolyzing the carbon-nitrogen bond between the sugar-phosphate backbone of the DNA and the mispaired base. The complementary strand guanine functions in substrate recognition. Required for DNA damage lesion repair in stationary-phase cells. The chain is G/U mismatch-specific DNA glycosylase from Salmonella dublin (strain CT_02021853).